The primary structure comprises 1181 residues: HEAT repeat-containing protein 6 (1181 aa).

The stretch at 159–198 (PELLGNTGLLMKLSDLAQSDPEVRRAAVHCMANLCLSVPG) is one HEAT 1 repeat. 2 disordered regions span residues 292–347 (QYDG…PVTG) and 371–390 (LDGS…SSSS). The span at 300–312 (KPQQSESSASRPT) shows a compositional bias: polar residues. The segment covering 313–325 (LNKKKKSKVKPKK) has biased composition (basic residues). A phosphoserine mark is found at Ser336 and Ser337. Ser399 and Ser402 each carry phosphoserine. HEAT repeat units follow at residues 452 to 490 (ELGS…GSKQ), 515 to 552 (SIRE…NAPY), and 558 to 595 (SLLT…THAP). The disordered stretch occupies residues 613 to 646 (NSNSATPHLSPPDWWKKAPAGPSLEETSVSSPKG). Thr618 carries the post-translational modification Phosphothreonine. Over residues 637–646 (EETSVSSPKG) the composition is skewed to polar residues. Residue Ser643 is modified to Phosphoserine.

As to expression, amplified in breast cancer cell lines MCF-7 and BT-474.

In terms of biological role, amplification-dependent oncogene. This is HEAT repeat-containing protein 6 (HEATR6) from Homo sapiens (Human).